Reading from the N-terminus, the 225-residue chain is E3 ubiquitin-protein ligase ATL59 (225 aa).

Residues 22-42 (FTFIVCVPICVILIVLLVLYI) form a helical membrane-spanning segment. Residues 97 to 139 (CSVCLGDYQAEEKLQQMPSCGHTFHMECIDLWLTSHTTCPLCR) form an RING-type; atypical zinc finger.

The protein belongs to the RING-type zinc finger family. ATL subfamily.

It is found in the membrane. It carries out the reaction S-ubiquitinyl-[E2 ubiquitin-conjugating enzyme]-L-cysteine + [acceptor protein]-L-lysine = [E2 ubiquitin-conjugating enzyme]-L-cysteine + N(6)-ubiquitinyl-[acceptor protein]-L-lysine.. Its pathway is protein modification; protein ubiquitination. E3 ubiquitin-protein ligase able to catalyze polyubiquitination with ubiquitin-conjugating enzyme E2 UBC8, UBC10, UBC11, and UBC34 in vitro. The polypeptide is E3 ubiquitin-protein ligase ATL59 (ATL59) (Arabidopsis thaliana (Mouse-ear cress)).